The primary structure comprises 228 residues: MAAPQDVHVRICNQEIVKFDLEVKALIQDIRDCSGPLSELTELNTKVKEKFQQLKQRIQELEQSAREQDKESEKQLLLQEVENHKKQMLSNQTSWRKANLTCKLAIDNLEKAELLQGGDSLRQRKTTKESLAQTSSSITESLMGISRMMSQQVQQSEEAMQTLVSSSRTLLDANEEFKSMSGTIQLGRKLITKYNRRELTDKLLIFLALALFLATVLYIVKKRLFPFL.

Topologically, residues 1–199 (MAAPQDVHVR…LITKYNRREL (199 aa)) are cytoplasmic. A coiled-coil region spans residues 37 to 90 (LSELTELNTKVKEKFQQLKQRIQELEQSAREQDKESEKQLLLQEVENHKKQMLS). Residues 200–220 (TDKLLIFLALALFLATVLYIV) form a helical; Anchor for type IV membrane protein membrane-spanning segment. The Lumenal segment spans residues 221 to 228 (KKRLFPFL).

Belongs to the SEC20 family. As to quaternary structure, component of a SNARE complex consisting of STX18, USE1L, BNIP1/SEC20L and SEC22B. Interacts directly with STX18, RINT1/TIP20L and NAPA. Interacts with ZW10 through RINT1. Interacts with BCL2. Interacts with RNF186. Interacts with RNF185. Interacts with SQSTM1; increased by 'Lys-63'-linked polyubiquitination of BNIP1. In terms of processing, polyubiquitinated. 'Lys-63'-linked polyubiquitination by RNF185 increases the interaction with the autophagy receptor SQSTM1. Undergoes 'Lys-29'- and 'Lys-63'-linked polyubiquitination by RNF186 that may regulate BNIP1 localization to the mitochondrion.

It is found in the endoplasmic reticulum membrane. Its subcellular location is the mitochondrion membrane. As part of a SNARE complex may be involved in endoplasmic reticulum membranes fusion and be required for the maintenance of endoplasmic reticulum organization. Also plays a role in apoptosis. It is for instance required for endoplasmic reticulum stress-induced apoptosis. As a substrate of RNF185 interacting with SQSTM1, might also be involved in mitochondrial autophagy. The polypeptide is Vesicle transport protein SEC20 (Mus musculus (Mouse)).